Consider the following 228-residue polypeptide: Triosephosphate isomerase (228 aa).

11-13 (NFK) contacts substrate. H95 acts as the Electrophile in catalysis. The Proton acceptor role is filled by E143. Substrate contacts are provided by residues I148, G183, and 204–205 (AS).

Belongs to the triosephosphate isomerase family. Homotetramer; dimer of dimers.

The protein resides in the cytoplasm. The enzyme catalyses D-glyceraldehyde 3-phosphate = dihydroxyacetone phosphate. It functions in the pathway carbohydrate biosynthesis; gluconeogenesis. Its pathway is carbohydrate degradation; glycolysis; D-glyceraldehyde 3-phosphate from glycerone phosphate: step 1/1. Its function is as follows. Involved in the gluconeogenesis. Catalyzes stereospecifically the conversion of dihydroxyacetone phosphate (DHAP) to D-glyceraldehyde-3-phosphate (G3P). This is Triosephosphate isomerase from Pyrococcus abyssi (strain GE5 / Orsay).